A 138-amino-acid chain; its full sequence is MRFSNKFKKVPYLLQALLNVCLFFLALALSALLISETWYIVLFVYKSLFNKVDSYYEMLGELLIFFMYFEFIALIIKYFKSDFHFPLRYFIYIGITAVIRLIIIDHDQAISTFWWAMAILAMICGFFIANRRNSVVEH.

A run of 4 helical transmembrane segments spans residues 12-34, 56-76, 84-104, and 109-129; these read YLLQALLNVCLFFLALALSALLI, YEMLGELLIFFMYFEFIALII, HFPLRYFIYIGITAVIRLIII, and AISTFWWAMAILAMICGFFIA.

This sequence belongs to the PsiE family.

Its subcellular location is the cell membrane. This is Protein PsiE homolog from Bacillus subtilis (strain 168).